A 391-amino-acid polypeptide reads, in one-letter code: Formate-dependent phosphoribosylglycinamide formyltransferase (391 aa).

N(1)-(5-phospho-beta-D-ribosyl)glycinamide-binding positions include 18–19 (EL) and E78. ATP-binding positions include R110, K151, 156–161 (SSGKGQ), 191–194 (EEFI), and E199. In terms of domain architecture, ATP-grasp spans 115–305 (DLAAQQLGLR…EFELHLRAVL (191 aa)). Mg(2+)-binding residues include E264 and E276. N(1)-(5-phospho-beta-D-ribosyl)glycinamide contacts are provided by residues D283, K353, and 360–361 (RR).

This sequence belongs to the PurK/PurT family. Homodimer.

The enzyme catalyses N(1)-(5-phospho-beta-D-ribosyl)glycinamide + formate + ATP = N(2)-formyl-N(1)-(5-phospho-beta-D-ribosyl)glycinamide + ADP + phosphate + H(+). It functions in the pathway purine metabolism; IMP biosynthesis via de novo pathway; N(2)-formyl-N(1)-(5-phospho-D-ribosyl)glycinamide from N(1)-(5-phospho-D-ribosyl)glycinamide (formate route): step 1/1. Its function is as follows. Involved in the de novo purine biosynthesis. Catalyzes the transfer of formate to 5-phospho-ribosyl-glycinamide (GAR), producing 5-phospho-ribosyl-N-formylglycinamide (FGAR). Formate is provided by PurU via hydrolysis of 10-formyl-tetrahydrofolate. The chain is Formate-dependent phosphoribosylglycinamide formyltransferase from Synechococcus elongatus (strain ATCC 33912 / PCC 7942 / FACHB-805) (Anacystis nidulans R2).